An 805-amino-acid polypeptide reads, in one-letter code: Angiotensin-converting enzyme 2 (805 aa).

A signal peptide spans 1 to 17 (MSGSFWLLLSFAALTAA). Residues 18–740 (QSTTEELAKT…LSPPYRPPVT (723 aa)) lie on the Extracellular side of the membrane. Positions 19–607 (STTEELAKTF…QNRNSFVGWD (589 aa)) constitute a Peptidase M2 domain. Residues 30–41 (ETFNYEAQELSY) are interaction with SARS S protein. Asn-53 carries N-linked (GlcNAc...) asparagine glycosylation. Interaction with SARS S protein regions lie at residues 82–84 (TYP) and 90–93 (DAKI). Cys-133 and Cys-141 are oxidised to a cystine. Arg-169 contributes to the chloride binding site. N-linked (GlcNAc...) asparagine glycosylation is present at Asn-216. Arg-273 provides a ligand contact to substrate. Asn-322 carries N-linked (GlcNAc...) asparagine glycosylation. Cys-344 and Cys-361 are oxidised to a cystine. 345 to 346 (HP) provides a ligand contact to substrate. Residues 353–357 (KGDFR) form an interaction with SARS S protein region. Residue His-374 coordinates Zn(2+). Glu-375 (proton acceptor) is an active-site residue. His-378 and Glu-402 together coordinate Zn(2+). Residues Trp-477 and Lys-481 each coordinate chloride. Catalysis depends on His-505, which acts as the Proton donor. Tyr-515 provides a ligand contact to substrate. A disulfide bridge connects residues Cys-530 and Cys-542. The N-linked (GlcNAc...) asparagine glycan is linked to Asn-546. The Collectrin-like domain maps to 614-805 (SDQSIKVRIS…QHADDVQTSF (192 aa)). The essential for cleavage by ADAM17 stretch occupies residues 652 to 659 (REYFSKVK). 2 N-linked (GlcNAc...) asparagine glycosylation sites follow: Asn-660 and Asn-690. Positions 697–716 (RSEVEDAIRMSRSRINDAFR) are essential for cleavage by TMPRSS11D and TMPRSS2. The chain crosses the membrane as a helical span at residues 741-761 (IWLIVFGVVMGAIVVGIVLLI). Topologically, residues 762–805 (VSGIRNRRKNDQAGSEENPYASVDLNKGENNPGFQHADDVQTSF) are cytoplasmic. Residues 771-805 (NDQAGSEENPYASVDLNKGENNPGFQHADDVQTSF) are disordered. The LIR signature appears at 778–786 (ENPYASVDL). Residue Tyr-781 is modified to Phosphotyrosine. Positions 781–784 (YASV) match the Endocytic sorting signal motif. An SH2-binding motif is present at residues 781–785 (YASVD). Ser-783 carries the post-translational modification Phosphoserine. The short motif at 792 to 795 (NPGF) is the PTB element. The short motif at 803–805 (TSF) is the PDZ-binding element.

This sequence belongs to the peptidase M2 family. In terms of assembly, homodimer. Interacts with the catalytically active form of TMPRSS2. Interacts with SLC6A19; this interaction is essential for expression and function of SLC6A19 in intestine. Interacts with ITGA5:ITGB1. Probably interacts (via endocytic sorting signal motif) with AP2M1; the interaction is inhibited by phosphorylation of Tyr-781. Interacts (via PDZ-binding motif) with NHERF1 (via PDZ domains); the interaction may enhance ACE2 membrane residence. (Microbial infection) Interacts with SARS-CoV S protein. Zn(2+) is required as a cofactor. Chloride serves as cofactor. In terms of processing, proteolytic cleavage by ADAM17 generates a secreted form. Also cleaved by serine proteases: TMPRSS2, TMPRSS11D and HPN/TMPRSS1. Post-translationally, phosphorylated. Phosphorylation at Tyr-781 probably inhibits interaction with AP2M1 and enables interactions with proteins containing SH2 domains.

The protein localises to the secreted. It localises to the cell membrane. Its subcellular location is the cytoplasm. The protein resides in the cell projection. It is found in the cilium. The protein localises to the apical cell membrane. The enzyme catalyses angiotensin II + H2O = angiotensin-(1-7) + L-phenylalanine. The catalysed reaction is angiotensin I + H2O = angiotensin-(1-9) + L-leucine. In terms of biological role, essential counter-regulatory carboxypeptidase of the renin-angiotensin hormone system that is a critical regulator of blood volume, systemic vascular resistance, and thus cardiovascular homeostasis. Converts angiotensin I to angiotensin 1-9, a nine-amino acid peptide with anti-hypertrophic effects in cardiomyocytes, and angiotensin II to angiotensin 1-7, which then acts as a beneficial vasodilator and anti-proliferation agent, counterbalancing the actions of the vasoconstrictor angiotensin II. Also removes the C-terminal residue from three other vasoactive peptides, neurotensin, kinetensin, and des-Arg bradykinin, but is not active on bradykinin. Also cleaves other biological peptides, such as apelins, casomorphins and dynorphin A. Plays an important role in amino acid transport by acting as binding partner of amino acid transporter SLC6A19 in intestine, regulating trafficking, expression on the cell surface, and its catalytic activity. (Microbial infection) Acts as a receptor for human coronavirus SARS. This Paguma larvata (Masked palm civet) protein is Angiotensin-converting enzyme 2 (ACE2).